Here is a 73-residue protein sequence, read N- to C-terminus: Large ribosomal subunit protein bL31 (73 aa).

It belongs to the bacterial ribosomal protein bL31 family. Type A subfamily. As to quaternary structure, part of the 50S ribosomal subunit.

In terms of biological role, binds the 23S rRNA. This is Large ribosomal subunit protein bL31 from Rhizobium meliloti (strain 1021) (Ensifer meliloti).